A 521-amino-acid polypeptide reads, in one-letter code: GMP synthase [glutamine-hydrolyzing] (521 aa).

The Glutamine amidotransferase type-1 domain occupies K8–L203. Catalysis depends on C85, which acts as the Nucleophile. Catalysis depends on residues H177 and E179. Residues W204–R396 enclose the GMPS ATP-PPase domain. S231 to S237 is a binding site for ATP.

Homodimer.

The catalysed reaction is XMP + L-glutamine + ATP + H2O = GMP + L-glutamate + AMP + diphosphate + 2 H(+). It participates in purine metabolism; GMP biosynthesis; GMP from XMP (L-Gln route): step 1/1. In terms of biological role, catalyzes the synthesis of GMP from XMP. This chain is GMP synthase [glutamine-hydrolyzing], found in Stenotrophomonas maltophilia (strain R551-3).